Consider the following 82-residue polypeptide: Delta-ctenitoxin-Pn2a (82 aa).

An N-terminal signal peptide occupies residues 1-17 (MKVAILFLSILVLAVAS). A propeptide spanning residues 18 to 34 (ESIEESRDDFAVEELGR) is cleaved from the precursor. Intrachain disulfides connect Cys-37/Cys-51, Cys-44/Cys-57, Cys-48/Cys-80, Cys-50/Cys-65, and Cys-59/Cys-63.

Belongs to the neurotoxin 03 (Tx2) family. 06 subfamily. As to expression, expressed by the venom gland.

Its subcellular location is the secreted. Its function is as follows. Toxin that is known to potentiate erectile function. It binds voltage-dependently to sodium channels (Nav), inhibits the inactivation of the activated channels and decreases the peak inward current. The toxin delays inactivation of Nav1.2/SCN2A, Nav1.3/SCN3A, Nav1.4/SCN4A and Nav1.8/SCN10A, slows the inactivation process and decreases the sodium peak amplitude of Nav1.5/SCN5A and Nav1.6/SCN8A. In vivo, it enhances erectile function by inducing the release of nictric oxide (NO): it slows the sodium current, leading to depolarization, which leads to an increase in calcium influx (probably via activation of N-type calcium channels) which in turn activates neuronal NO synthase (nNOS/NOS1), inducing nitric oxide (NO) production. In a final step, NO activates soluble guanylate cyclase (GUCY1A1/GUCY1B1) which in turn increases cGMP formation, resulting in penile erection. It is noteworthy that the toxin does not provoke erection by inhibiting phosphodiesterase type 5 (PDE5A), an enzyme that hydrolysis cGMP. In vivo, it also causes scratching, lacrimation, hypersalivation, sweating and agitation followed by spastic paralysis of the anterior and posterior extremities and death at dose levels of 0.79 mg/mouse. It is insecticidal to the larval and adult forms of the house fly. The toxin also improves cavernosal relaxation in different models where erectile dysfunction is observed, such as deoxycorticosterone-acetate (DOCA)-salt hypertensive rats, mice models for type-1 diabetes, as well as elderly rats. In Phoneutria nigriventer (Brazilian armed spider), this protein is Delta-ctenitoxin-Pn2a.